The chain runs to 1049 residues: Protein argonaute 12 (1049 aa).

The segment covering 1–53 (MSSRGGGGGGRRGGRGGGGGREGGGGGGGGGGRGGQGRGDLGVVGERQGGGRG) has biased composition (gly residues). Disordered regions lie at residues 1–101 (MSSR…GVQV) and 144–192 (GGAP…KAVT). Residues 54–65 (AGERGGRHDAPR) are compositionally biased toward basic and acidic residues. Residues 66-76 (GRGGVAVGAGA) show a composition bias toward gly residues. Residues 144–160 (GGAPPAGQGSSLAAAQG) show a composition bias toward low complexity. A PAZ domain is found at 404-515 (PVMDFAVQYL…LPMEVCSILE (112 aa)). The 319-residue stretch at 694 to 1012 (LLIVILTEIS…GAFRARYYME (319 aa)) folds into the Piwi domain.

Belongs to the argonaute family. Ago subfamily.

Functionally, probably involved in the RNA silencing pathway. May bind to short RNAs such as microRNAs (miRNAs) or short interfering RNAs (siRNAs), and represses the translation of mRNAs which are complementary to them. In Oryza sativa subsp. japonica (Rice), this protein is Protein argonaute 12 (AGO12).